Reading from the N-terminus, the 589-residue chain is Capsid scaffolding protein (589 aa).

Residues His-47, Ser-118, and His-142 each act as charge relay system in the active site. Over residues 264 to 273 (EKERPKEPEQ) the composition is skewed to basic and acidic residues. The disordered stretch occupies residues 264–283 (EKERPKEPEQSHVPTESMSH). The interval 307-326 (HDGVYLPKDAFFSLIGASRP) is interaction with pAP. 2 disordered regions span residues 421 to 478 (RSRS…GDRY) and 514 to 552 (ASPT…AERG). 2 consecutive short sequence motifs (nuclear localization signal) follow at residues 428-433 (KRRRER) and 453-459 (KARKRLK). Residues 453–462 (KARKRLKAHH) are compositionally biased toward basic residues. Residues 514–543 (ASPTTTTSHQAEASEPQASTAAAAPSTASS) show a composition bias toward low complexity. The interaction with major capsid protein stretch occupies residues 569–589 (PPKDMVDLNRRLFVAALNKME).

This sequence belongs to the herpesviridae capsid scaffolding protein family. In terms of assembly, homomultimer. Interacts with major capsid protein. As to quaternary structure, exists in a monomer-dimer equilibrium with the dimer being the active species. Capsid scaffolding protein is cleaved by assemblin after formation of the spherical procapsid. As a result, the capsid obtains its mature, icosahedral shape. Cleavages occur at two or more sites: release (R-site) and maturation (M-site).

Its subcellular location is the host cytoplasm. The protein localises to the host nucleus. The enzyme catalyses Cleaves -Ala-|-Ser- and -Ala-|-Ala- bonds in the scaffold protein.. Functionally, acts as a scaffold protein by binding major capsid protein in the cytoplasm, inducing the nuclear localization of both proteins. Multimerizes in the nucleus such as major capsid protein forms the icosahedral T=16 capsid. Autocatalytic cleavage releases the assembly protein, and subsequently abolishes interaction with major capsid protein. Cleavages products are evicted from the capsid before or during DNA packaging. Protease that plays an essential role in virion assembly within the nucleus. Catalyzes the cleavage of the assembly protein after formation of the spherical procapsid. By that cleavage, the capsid matures and gains its icosahedral shape. The cleavage sites seem to include -Ala-Ser-, -Ala-Ala-, as well as Ala-Thr bonds. Assemblin and cleavages products are evicted from the capsid before or during DNA packaging. Its function is as follows. Plays a major role in capsid assembly. Acts as a scaffold protein by binding major capsid protein. Multimerizes in the nucleus such as major capsid protein forms the icosahedral T=16 capsid. Cleaved by assemblin after capsid completion. The cleavages products are evicted from the capsid before or during DNA packaging. The polypeptide is Capsid scaffolding protein (UL80) (Simian cytomegalovirus (strain Colburn)).